The following is an 819-amino-acid chain: FYN-binding protein 1 (819 aa).

Positions 1–45 are enriched in polar residues; that stretch reads MAKFNTGSNPTEEAATSSRPFKVAGQSSPSGIQSRKNLFDNQGNA. The segment at 1 to 490 is disordered; it reads MAKFNTGSNP…REKKEQELKK (490 aa). Residue Lys3 is modified to N6-acetyllysine. 2 positions are modified to phosphoserine: Ser28 and Ser46. Positions 69–79 are enriched in basic and acidic residues; it reads TYEEKPEKEPK. Residues 150 to 160 show a composition bias toward pro residues; it reads GPKPGPAPPVP. Ser222 bears the Phosphoserine mark. 2 stretches are compositionally biased toward basic and acidic residues: residues 237-248 and 273-285; these read PPKEDPEDKDHG and NFEE…KTDL. Ser318 is subject to Phosphoserine. Pro residues-rich tracts occupy residues 342–351 and 380–412; these read GPPPPKPNRP and LPPP…PRNI. Acidic residues predominate over residues 439–453; sequence LEEEQESEGETYEDI. Ser445 bears the Phosphoserine mark. Residues 448–495 adopt a coiled-coil conformation; sequence ETYEDIDSSKERDKKREKEEKKRLELERKEQKEREKKEQELKKKFKLT. A compositionally biased stretch (basic and acidic residues) spans 454–489; that stretch reads DSSKERDKKREKEEKKRLELERKEQKEREKKEQELK. A Nuclear localization signal motif is present at residues 479–493; sequence KEREKKEQELKKKFK. The SH3 1 domain occupies 499-560; it reads QVIHHAKACC…KTTAVEIDYD (62 aa). Tyr559 carries the post-translational modification Phosphotyrosine. A phosphoserine mark is found at Ser561 and Ser568. Positions 584–587 match the SH2-binding; to LCP2 motif; that stretch reads YDDV. Disordered regions lie at residues 589 to 635 and 649 to 728; these read EQDA…DEKT and KDDR…EKEE. Acidic residues predominate over residues 610–626; it reads TDDEIYDGIEEEDDDDG. The SH2-binding; to FYN signature appears at 615 to 618; it reads YDGI. Residues 649 to 664 show a composition bias toward basic and acidic residues; that stretch reads KDDRKKSIREKPKVSE. The span at 668-677 shows a compositional bias: polar residues; the sequence is NEGSSLPSQH. A compositionally biased stretch (acidic residues) spans 682–692; it reads VGEEVYDDVDA. Tyr687 carries the post-translational modification Phosphotyrosine. The Nuclear localization signal motif lies at 710–736; that stretch reads RAKTEEKDPKKLKKQEKEEKDLRKKFK. The span at 711–728 shows a compositional bias: basic and acidic residues; the sequence is AKTEEKDPKKLKKQEKEE. Positions 736-804 constitute an SH3 2 domain; the sequence is KYDGEIRVLY…LRSYLVDNDG (69 aa).

In terms of assembly, part of a complex consisting of SKAP2, FYB1 and PTPNS1. Part of a complex consisting of SKAP2, FYB1 and PIRB. Part of a complex consisting of SKAP1, FYB1 and CLNK. Interacts with CLNK (via its SH2 domain); this interaction allows SKAP1 and FYB1 to recruit FYN to the complex, thus promoting the phosphorylation of CLNK by FYN. Interacts with FYN. Interacts with LCP2. Interacts with SKAP1. Interacts with SKAP2. Interacts with FASLG. Interacts with EVL. Interacts with TMEM47. Interacts with LCK. In terms of processing, T-cell receptor ligation leads to increased tyrosine phosphorylation. As to expression, expressed in hematopoietic tissues such as myeloid and T-cells, spleen and thymus. Not expressed in B-cells, nor in non-lymphoid tissues. FYB-130 is preferentially expressed in mature T-cells compared to FYB-120, whereas thymocytes showed a greater relative amount of FYB-120. Expressed in podocytes.

The protein resides in the cytoplasm. It is found in the nucleus. Its subcellular location is the cell junction. Its function is as follows. Acts as an adapter protein of the FYN and LCP2 signaling cascades in T-cells. May play a role in linking T-cell signaling to remodeling of the actin cytoskeleton. Modulates the expression of IL2. Involved in platelet activation. Prevents the degradation of SKAP1 and SKAP2. May be involved in high affinity immunoglobulin epsilon receptor signaling in mast cells. The sequence is that of FYN-binding protein 1 (Fyb1) from Mus musculus (Mouse).